The sequence spans 119 residues: Large ribosomal subunit protein uL18 (119 aa).

This sequence belongs to the universal ribosomal protein uL18 family. As to quaternary structure, part of the 50S ribosomal subunit; part of the 5S rRNA/L5/L18/L25 subcomplex. Contacts the 5S and 23S rRNAs.

In terms of biological role, this is one of the proteins that bind and probably mediate the attachment of the 5S RNA into the large ribosomal subunit, where it forms part of the central protuberance. This Clostridium botulinum (strain Langeland / NCTC 10281 / Type F) protein is Large ribosomal subunit protein uL18.